A 678-amino-acid chain; its full sequence is Oviduct-specific glycoprotein (678 aa).

Positions 1–21 are cleaved as a signal peptide; it reads MWKLLLWVGLVLVLKHHDGAA. A GH18 domain is found at 22–385; that stretch reads HKLVCYFTNW…YVLNDILVRA (364 aa). Cys26 and Cys51 are oxidised to a cystine. Residues 71–72, 98–101, Tyr142, 211–214, and Trp355 contribute to the chitin site; these read LQ, GGWN, and LSYD. N-linked (GlcNAc...) asparagine glycans are attached at residues Asn402 and Asn441. A disordered region spans residues 524–544; the sequence is LTPVGHQSVTPVSHQSVSPGG. Residues 528 to 544 show a composition bias toward polar residues; the sequence is GHQSVTPVSHQSVSPGG. 3 N-linked (GlcNAc...) asparagine glycosylation sites follow: Asn580, Asn596, and Asn648. The disordered stretch occupies residues 581 to 606; that stretch reads ISVTPEGQTMPLRGENLTSEVGTHPR. Residues 651-662 show a composition bias toward polar residues; it reads SVNSVTPQTSPL. The tract at residues 651-678 is disordered; the sequence is SVNSVTPQTSPLSLKKEIPENSAVDEEA.

The protein belongs to the glycosyl hydrolase 18 family. In terms of tissue distribution, oviduct.

The protein resides in the cytoplasmic vesicle. Its subcellular location is the secretory vesicle. Functionally, binds to oocyte zona pellucida in vivo. May play a role in the fertilization process and/or early embryonic development. This is Oviduct-specific glycoprotein (OVGP1) from Homo sapiens (Human).